A 144-amino-acid chain; its full sequence is Interleukin-9 (144 aa).

The first 18 residues, 1–18 (MLVTYILASVLLFSSVLG), serve as a signal peptide directing secretion. Glutamine 19 carries the post-translational modification Pyrrolidone carboxylic acid. N-linked (GlcNAc...) asparagine glycosylation is found at asparagine 50, asparagine 78, asparagine 101, and asparagine 114.

It belongs to the IL-7/IL-9 family. In terms of assembly, interacts with IL9R. Interacts with IL2RG.

The protein localises to the secreted. Multifunctional cytokine secreted mainly by T-helper 2 lymphocytes and also mast cells or NKT cells that plays important roles in the immune response against parasites. Affects intestinal epithelial permeability and adaptive immunity. In addition, induces the differentiation of specific T-cell subsets such as IL-17 producing helper T-cells (TH17) and also proliferation and differentiation of mast cells. Mechanistically, exerts its biological effects through a receptor composed of IL9R subunit and a signal transducing subunit IL2RG. Receptor stimulation results in the rapid activation of JAK1 and JAK3 kinase activities leading to STAT1, STAT3 and STAT5-mediated transcriptional programs. Induction of differentiation genes seems to be mediated by STAT1 alone, while protection of cells from apoptosis depends on STAT3 and STAT5. The sequence is that of Interleukin-9 (Il9) from Mus musculus (Mouse).